The chain runs to 322 residues: tRNA dimethylallyltransferase (322 aa).

Residue glycine 18 to serine 25 participates in ATP binding. Threonine 20–serine 25 contributes to the substrate binding site. Interaction with substrate tRNA regions lie at residues aspartate 43–glutamine 46 and glutamine 167–arginine 171.

The protein belongs to the IPP transferase family. In terms of assembly, monomer. Mg(2+) is required as a cofactor.

The enzyme catalyses adenosine(37) in tRNA + dimethylallyl diphosphate = N(6)-dimethylallyladenosine(37) in tRNA + diphosphate. Its function is as follows. Catalyzes the transfer of a dimethylallyl group onto the adenine at position 37 in tRNAs that read codons beginning with uridine, leading to the formation of N6-(dimethylallyl)adenosine (i(6)A). This Chlorobium phaeobacteroides (strain BS1) protein is tRNA dimethylallyltransferase.